A 576-amino-acid chain; its full sequence is 5'-nucleotidase (576 aa).

The N-terminal stretch at 1–28 (MRPAAAKVPKWLLLALSALLPQWPAASA) is a signal peptide. Residues Asp38 and His40 each coordinate Zn(2+). A disulfide bond links Cys53 and Cys59. The N-linked (GlcNAc...) asparagine glycan is linked to Asn55. The Zn(2+) site is built by Asp87, Asn119, His222, and His245. N-linked (GlcNAc...) asparagine glycosylation is found at Asn313 and Asn335. Cystine bridges form between Cys355/Cys360 and Cys367/Cys389. Arg356 serves as a coordination point for AMP. Arg356 is a binding site for IMP. Residues Asn392 and Arg397 each contribute to the AMP site. Residues Asn392 and Arg397 each coordinate IMP. Asn405 is a glycosylation site (N-linked (GlcNAc...) asparagine). Phe419 contributes to the AMP binding site. Phe419 lines the IMP pocket. The cysteines at positions 478 and 481 are disulfide-linked. AMP contacts are provided by Tyr502 and Asp508. Residues Tyr502 and Asp508 each contribute to the IMP site. Ser551 carries GPI-anchor amidated serine lipidation. The propeptide at 552-576 (AASHYQGSFPLVILSFWAMILILYQ) is removed in mature form.

It belongs to the 5'-nucleotidase family. As to quaternary structure, homodimer. The cofactor is Zn(2+). In terms of tissue distribution, expressed at high levels in the placenta, kidney, lung and stomach and at lower levels in the thymus, spleen, skeletal muscle and esophagus.

Its subcellular location is the cell membrane. It carries out the reaction a ribonucleoside 5'-phosphate + H2O = a ribonucleoside + phosphate. The catalysed reaction is a 2'-deoxyribonucleoside 5'-phosphate + H2O = a 2'-deoxyribonucleoside + phosphate. It catalyses the reaction dTMP + H2O = thymidine + phosphate. The enzyme catalyses CMP + H2O = cytidine + phosphate. It carries out the reaction IMP + H2O = inosine + phosphate. The catalysed reaction is AMP + H2O = adenosine + phosphate. It catalyses the reaction GMP + H2O = guanosine + phosphate. The enzyme catalyses UMP + H2O = uridine + phosphate. It carries out the reaction dAMP + H2O = 2'-deoxyadenosine + phosphate. The catalysed reaction is dCMP + H2O = 2'-deoxycytidine + phosphate. In terms of biological role, catalyzes the hydrolysis of nucleotide monophosphates, releasing inorganic phosphate and the corresponding nucleoside. Hydrolyzes IMP. Shows a preference for ribonucleotide monophosphates over their equivalent deoxyribose forms. Although AMP is the preferred substrate can also hydrolyze UMP, GMP, CMP, dAMP, dCMP, dTMP, NAD and NMN. The protein is 5'-nucleotidase (Nt5e) of Mus musculus (Mouse).